Here is a 98-residue protein sequence, read N- to C-terminus: uncharacterized protein (98 aa).

The first 19 residues, 1-19 (MTERRRALSLAAVVDSINL), serve as a signal peptide directing secretion. Positions 40 to 98 (PPGGSFSGIKRESRRKRPSRNEIYGGGVLEQEVRMRRWSKTASPPVSLHHRPLGPARKP) are disordered. Basic residues predominate over residues 87 to 98 (LHHRPLGPARKP).

This is an uncharacterized protein from Homo sapiens (Human).